The primary structure comprises 77 residues: Serine protease inhibitor 1 (77 aa).

A signal peptide spans 1–17; the sequence is MMFTPLIVLTLLVLATA. 5 disulfide bridges follow: Cys21–Cys53, Cys30–Cys48, Cys33–Cys44, Cys37–Cys74, and Cys55–Cys68. Residues 21 to 74 enclose the TIL domain; the sequence is CGPNEQWSDCPGCELQCGESDKPCPAMCGDPKCYCSPDQYRRIPDGRCIRKIQC.

It is found in the secreted. Defends the organism against the host's proteinases. The protein is Serine protease inhibitor 1 of Anisakis simplex (Herring worm).